A 436-amino-acid chain; its full sequence is Nucleolar protein 4-like (436 aa).

The disordered stretch occupies residues 1–184 (MSDSTWMSAD…KMNDSEGMDP (184 aa)). Residues 41-61 (SESGSGNGSSTLNPSTSSSTQ) show a composition bias toward low complexity. At Ser-130 the chain carries Phosphoserine. Acidic residues predominate over residues 160-169 (ADDDDDDHDD). The span at 170 to 184 (HEDNDKMNDSEGMDP) shows a compositional bias: basic and acidic residues. Position 295 is a phosphoserine (Ser-295). Over residues 351–366 (QPPASLQTGNHSNGPT) the composition is skewed to polar residues. The tract at residues 351–400 (QPPASLQTGNHSNGPTDLSMKGGASTTSTTPTPTPSSTSTSRPVPTAQLS) is disordered. The segment covering 375 to 396 (STTSTTPTPTPSSTSTSRPVPT) has biased composition (low complexity).

This chain is Nucleolar protein 4-like (NOL4L), found in Homo sapiens (Human).